The sequence spans 243 residues: Ras-related protein Rab-12 (243 aa).

M1 carries the post-translational modification N-acetylmethionine. Residues 1–36 (MDPSAALHRRPAGGSLGAVSPALSGGQARRRKQPPR) are disordered. Phosphoserine occurs at positions 15, 20, and 24. Positions 51, 52, 53, 54, 55, 72, and 73 each coordinate GTP. T55 lines the Mg(2+) pocket. 2 short sequence motifs (switch) span residues 64-78 (DTFC…GVDF) and 96-113 (DTAG…YYRS). Mg(2+)-binding residues include T73 and D96. G99 is a GTP binding site. Residue S105 is modified to Phosphoserine; by LRRK2. GTP is bound by residues N154, K155, D157, S185, A186, and K187. Residues C242 and C243 are each lipidated (S-geranylgeranyl cysteine).

The protein belongs to the small GTPase superfamily. Rab family. In terms of assembly, interacts with RABIF and OPTN. Interacts with LRRK2; interaction facilitates phosphorylation of Ser-105. Interacts with GDI1, GDI2, CHM and CHML; these interactions are disrupted by phosphorylation on Ser-105. Interacts with RILPL1 and RILPL2; these interactions are dependent on phosphorylation of Ser-105. Mg(2+) serves as cofactor. Phosphorylation of Ser-105 in the switch II region by LRRK2 prevents the association of RAB regulatory proteins, including CHM, CHML and RAB GDP dissociation inhibitors GDI1 and GDI2. In terms of tissue distribution, ubiquitously expressed.

Its subcellular location is the recycling endosome membrane. It is found in the lysosome membrane. The protein localises to the golgi apparatus membrane. The protein resides in the cytoplasmic vesicle. It localises to the autophagosome. The catalysed reaction is GTP + H2O = GDP + phosphate + H(+). Its activity is regulated as follows. Regulated by guanine nucleotide exchange factors (GEFs) including DENND3 which promote the exchange of bound GDP for free GTP. Regulated by GTPase activating proteins (GAPs) which increase the GTP hydrolysis activity. Inhibited by GDP dissociation inhibitors (GDIs). Functionally, the small GTPases Rab are key regulators of intracellular membrane trafficking, from the formation of transport vesicles to their fusion with membranes. Rabs cycle between an inactive GDP-bound form and an active GTP-bound form that is able to recruit to membranes different set of downstream effectors directly responsible for vesicle formation, movement, tethering and fusion. RAB12 may play a role in protein transport from recycling endosomes to lysosomes regulating, for instance, the degradation of the transferrin receptor. Involved in autophagy. The sequence is that of Ras-related protein Rab-12 from Mus musculus (Mouse).